The sequence spans 223 residues: Cytidylate kinase (223 aa).

12–20 (GPAGSGKST) is an ATP binding site.

Belongs to the cytidylate kinase family. Type 1 subfamily.

It localises to the cytoplasm. The enzyme catalyses CMP + ATP = CDP + ADP. It catalyses the reaction dCMP + ATP = dCDP + ADP. In Onion yellows phytoplasma (strain OY-M), this protein is Cytidylate kinase.